The sequence spans 189 residues: Interferon alpha-F (189 aa).

A signal peptide spans 1–23 (MAPAWSLLLALLLLSCNAICSLG). Intrachain disulfides connect C24–C122 and C52–C162.

Belongs to the alpha/beta interferon family.

It is found in the secreted. In terms of biological role, produced by macrophages, IFN-alpha have antiviral activities. Interferon stimulates the production of two enzymes: a protein kinase and an oligoadenylate synthetase. This is Interferon alpha-F (IFNAF) from Bos taurus (Bovine).